Reading from the N-terminus, the 729-residue chain is NAD(P)H-quinone oxidoreductase subunit 5, chloroplastic (729 aa).

18 helical membrane passes run 9 to 29, 39 to 59, 87 to 107, 125 to 145, 147 to 167, 184 to 204, 218 to 238, 258 to 278, 289 to 311, 327 to 347, 354 to 374, 395 to 415, 425 to 445, 540 to 560, 592 to 612, 627 to 646, 676 to 696, and 708 to 728; these read WIIP…SFFF, LCAL…LAIF, FLVD…GVLV, YAYL…PNLI, LYVF…FWFA, IGDF…GSFE, IGFS…AGPV, TPIS…FFIA, LVMQ…LALA, LGYM…FHLV, ALLF…VGYS, GTTF…ACFW, WLSS…TAFY, FSLV…INLI, ILLN…FSFI, LVGF…SWSL, YGID…GEFI, and LFII…FLPF.

This sequence belongs to the complex I subunit 5 family. In terms of assembly, NDH is composed of at least 16 different subunits, 5 of which are encoded in the nucleus.

The protein localises to the plastid. Its subcellular location is the chloroplast thylakoid membrane. It carries out the reaction a plastoquinone + NADH + (n+1) H(+)(in) = a plastoquinol + NAD(+) + n H(+)(out). The enzyme catalyses a plastoquinone + NADPH + (n+1) H(+)(in) = a plastoquinol + NADP(+) + n H(+)(out). NDH shuttles electrons from NAD(P)H:plastoquinone, via FMN and iron-sulfur (Fe-S) centers, to quinones in the photosynthetic chain and possibly in a chloroplast respiratory chain. The immediate electron acceptor for the enzyme in this species is believed to be plastoquinone. Couples the redox reaction to proton translocation, and thus conserves the redox energy in a proton gradient. In Adiantum capillus-veneris (Maidenhair fern), this protein is NAD(P)H-quinone oxidoreductase subunit 5, chloroplastic (ndhF).